A 147-amino-acid polypeptide reads, in one-letter code: MTMALDHKQIMRMLPHSYPFLLVDRVLECIPGKSIVALKNVTFNEPFFVGHFRDNPVMPGVLIIESMAQSSMLCVVSDREGDEASGNRSVYFMSIDGAKFRRVVVPGDTLTIKSAVIHMRGTTCKFQCHAYVGDELASEAQILAMMG.

The active site involves His51.

It belongs to the thioester dehydratase family. FabZ subfamily.

It localises to the cytoplasm. It catalyses the reaction a (3R)-hydroxyacyl-[ACP] = a (2E)-enoyl-[ACP] + H2O. In terms of biological role, involved in unsaturated fatty acids biosynthesis. Catalyzes the dehydration of short chain beta-hydroxyacyl-ACPs and long chain saturated and unsaturated beta-hydroxyacyl-ACPs. The chain is 3-hydroxyacyl-[acyl-carrier-protein] dehydratase FabZ from Anaplasma marginale (strain Florida).